Consider the following 830-residue polypeptide: Ent-cassa-12,15-diene synthase (830 aa).

The disordered stretch occupies residues 1–50 (MMLLGSPSSGGYGGKFAGASPAGGTTTMAPSAKQPSSRAPPPGITGGRND). Polar residues predominate over residues 23–37 (GGTTTMAPSAKQPSS). Positions 577, 581, 721, and 729 each coordinate Mg(2+). Positions 577-581 (DDLFD) match the DDXXD motif motif.

The protein belongs to the terpene synthase family. Requires Mg(2+) as cofactor. In terms of tissue distribution, expressed in roots and stems.

It catalyses the reaction ent-copalyl diphosphate = ent-cassa-12,15-diene + diphosphate. In terms of biological role, involved in phytocassane phytoalexins biosynthesis. Catalyzes the conversion of ent-copalyl diphosphate to the phytoalexin precursor ent-cassa-12,15-diene. This chain is Ent-cassa-12,15-diene synthase (KSL7), found in Oryza sativa subsp. indica (Rice).